Reading from the N-terminus, the 250-residue chain is Bacteriorhodopsin-II (250 aa).

The next 7 helical transmembrane spans lie at 14 to 34 (EGIW…YFMA), 49 to 69 (VITI…FFGF), 89 to 109 (YADW…LAGA), 114 to 134 (MASL…ATLM), 142 to 162 (AFWT…VVVV), 183 to 203 (IILV…EGLG), and 210 to 230 (ETLL…FILL). Lys222 is subject to N6-(retinylidene)lysine.

It belongs to the archaeal/bacterial/fungal opsin family. Post-translationally, the covalent binding of retinal to the apoprotein, bacterioopsin, generates bacteriorhodopsin.

It is found in the membrane. In terms of biological role, light-driven proton pump. This Haloarcula marismortui (strain ATCC 43049 / DSM 3752 / JCM 8966 / VKM B-1809) (Halobacterium marismortui) protein is Bacteriorhodopsin-II (xop1).